The primary structure comprises 179 residues: MQQNIIKVIVGSKNPVKINAAANAMALLFPEYEIQTQGMDAPSGVPAQPMTDSDTRQGAINRVHYCQQQVEADYYFAMEGGVDCFEFGPATFAYIAIAHQARLSIGRGALLPLPMQVYQALEAGEELGHVMDRLFNTVNIKQKGGAIGLLTHGHATRESNYTQAIILAMAPFLNPELYP.

Residue E71 participates in Mg(2+) binding. Residue 71–72 (EA) coordinates substrate.

It belongs to the YjjX NTPase family. In terms of assembly, homodimer. It depends on Mg(2+) as a cofactor. Mn(2+) is required as a cofactor.

The enzyme catalyses XTP + H2O = XDP + phosphate + H(+). It carries out the reaction ITP + H2O = IDP + phosphate + H(+). In terms of biological role, phosphatase that hydrolyzes non-canonical purine nucleotides such as XTP and ITP to their respective diphosphate derivatives. Probably excludes non-canonical purines from DNA/RNA precursor pool, thus preventing their incorporation into DNA/RNA and avoiding chromosomal lesions. The protein is Inosine/xanthosine triphosphatase of Shewanella sp. (strain MR-7).